Consider the following 651-residue polypeptide: Polyadenylate-binding protein 1 (651 aa).

A compositionally biased stretch (low complexity) spans 1 to 27; the sequence is MSSTESPVPAAAAPAEAVPASTPAPAA. Residues 1–42 are disordered; the sequence is MSSTESPVPAAAAPAEAVPASTPAPAAEQPAVGNGEQRNNAD. RRM domains lie at 47–125, 135–211, 227–304, and 330–407; these read TSLY…WSQR, GNIF…HHIP, TNVY…RAQK, and VNLY…LAQR. Disordered stretches follow at residues 481–554 and 632–651; these read QPGQ…EADQ and QNDS…KTEA. Residues 529–540 show a composition bias toward pro residues; that stretch reads AGQPVPGQPMPR. The PABC domain maps to 555–632; the sequence is PGALTAAALA…ALEVLKEYQQ (78 aa). Over residues 636–651 the composition is skewed to low complexity; that stretch reads AGAEAEANAEAPKTEA.

Belongs to the polyadenylate-binding protein type-1 family. In terms of assembly, part of large ribonucleoprotein complexes (mRNPs) containing RNA-binding proteins RRM4 and PAB1, endosome-binding protein UPA1, core scaffold protein UPA2 and associated factor GRP1. Interacts (via PABC domain) with UPA1 (via PAM2 domain). Interacts (via PABC domain) with UPA2 (via PAM2 domains).

Its subcellular location is the cytoplasm. It localises to the cytoskeleton. The protein resides in the endosome. RNA-binding protein involved in the formation of polar-growing hyphae which is essential for infection by the plant pathogen. Component of endosomal mRNA transport that regulates polarity of the infectious hyphae by transporting a broad spectrum of cargo mRNAs from the nucleus to cell poles. The polypeptide is Polyadenylate-binding protein 1 (Mycosarcoma maydis (Corn smut fungus)).